A 977-amino-acid polypeptide reads, in one-letter code: DNA-directed RNA polymerase 3A, chloroplastic (977 aa).

Residues 1-72 constitute a chloroplast transit peptide; the sequence is MASTASYSPS…NNIQSQTTVC (72 aa). Active-site residues include aspartate 678, lysine 753, and aspartate 910.

The protein belongs to the phage and mitochondrial RNA polymerase family.

The protein localises to the plastid. It is found in the chloroplast. The enzyme catalyses RNA(n) + a ribonucleoside 5'-triphosphate = RNA(n+1) + diphosphate. Its function is as follows. DNA-dependent RNA polymerase catalyzes the transcription of DNA into RNA using the four ribonucleoside triphosphates as substrates. The protein is DNA-directed RNA polymerase 3A, chloroplastic (RPOT3-SYL) of Nicotiana tabacum (Common tobacco).